We begin with the raw amino-acid sequence, 699 residues long: Elongation factor G (699 aa).

Residues 8-283 (EHIRNIGICA…AVVDFLPSPI (276 aa)) form the tr-type G domain. Residues 17–24 (AHIDAGKT), 81–85 (DTPGH), and 135–138 (NKMD) each bind GTP.

It belongs to the TRAFAC class translation factor GTPase superfamily. Classic translation factor GTPase family. EF-G/EF-2 subfamily.

It is found in the cytoplasm. Catalyzes the GTP-dependent ribosomal translocation step during translation elongation. During this step, the ribosome changes from the pre-translocational (PRE) to the post-translocational (POST) state as the newly formed A-site-bound peptidyl-tRNA and P-site-bound deacylated tRNA move to the P and E sites, respectively. Catalyzes the coordinated movement of the two tRNA molecules, the mRNA and conformational changes in the ribosome. In Rickettsia helvetica, this protein is Elongation factor G.